The primary structure comprises 274 residues: Eukaryotic translation initiation factor 3 subunit G-2 (274 aa).

The region spanning 194–272 (SAVRISNLSE…LILCVEWSKP (79 aa)) is the RRM domain.

It belongs to the eIF-3 subunit G family. In terms of assembly, component of the eukaryotic translation initiation factor 3 (eIF-3) complex. The eIF-3 complex interacts with pix.

It localises to the cytoplasm. Functionally, RNA-binding component of the eukaryotic translation initiation factor 3 (eIF-3) complex, which is involved in protein synthesis of a specialized repertoire of mRNAs and, together with other initiation factors, stimulates binding of mRNA and methionyl-tRNAi to the 40S ribosome. The eIF-3 complex specifically targets and initiates translation of a subset of mRNAs involved in cell proliferation. This subunit can bind 18S rRNA. This Drosophila pseudoobscura pseudoobscura (Fruit fly) protein is Eukaryotic translation initiation factor 3 subunit G-2.